The primary structure comprises 113 residues: U11-theraphotoxin-Hhn1a (113 aa).

The signal sequence occupies residues 1 to 21 (MNTVRVTFLLVFVLAVSLGQA). Residues 22–74 (DKDENRMEMQEKTEQGKSYLDFAENLLLQKLEELEAKPLEEDSEESRNSRQKR) constitute a propeptide that is removed on maturation. Residues 57–69 (AKPLEEDSEESRN) are compositionally biased toward basic and acidic residues. Positions 57 to 83 (AKPLEEDSEESRNSRQKRCIGEGVPCD) are disordered. Disulfide bonds link C75-C90, C82-C95, and C89-C110.

The protein belongs to the neurotoxin 14 (magi-1) family. 01 (HNTX-16) subfamily. In terms of tissue distribution, expressed by the venom gland.

The protein resides in the secreted. In terms of biological role, probable ion channel inhibitor. The protein is U11-theraphotoxin-Hhn1a of Cyriopagopus hainanus (Chinese bird spider).